The primary structure comprises 603 residues: Aspartate--tRNA(Asp/Asn) ligase (603 aa).

Residue Glu-182 participates in L-aspartate binding. The aspartate stretch occupies residues 206-209 (QLFK). Position 228 (Arg-228) interacts with L-aspartate. Residues 228 to 230 (RDE) and Gln-237 each bind ATP. His-454 provides a ligand contact to L-aspartate. Position 500 (Glu-500) interacts with ATP. Residue Arg-507 participates in L-aspartate binding. 552–555 (GLDR) is a binding site for ATP.

This sequence belongs to the class-II aminoacyl-tRNA synthetase family. Type 1 subfamily. In terms of assembly, homodimer.

The protein resides in the cytoplasm. It carries out the reaction tRNA(Asx) + L-aspartate + ATP = L-aspartyl-tRNA(Asx) + AMP + diphosphate. Functionally, aspartyl-tRNA synthetase with relaxed tRNA specificity since it is able to aspartylate not only its cognate tRNA(Asp) but also tRNA(Asn). Reaction proceeds in two steps: L-aspartate is first activated by ATP to form Asp-AMP and then transferred to the acceptor end of tRNA(Asp/Asn). The polypeptide is Aspartate--tRNA(Asp/Asn) ligase (Aquifex aeolicus (strain VF5)).